The chain runs to 457 residues: Multidrug resistance protein MdtK (457 aa).

Transmembrane regions (helical) follow at residues 11–31 (LLAL…MGFV), 53–73 (IWLP…PVVA), 93–113 (WLAG…GYII), 127–147 (AVGY…FQVA), 160–180 (GMVM…IFIY), 191–211 (VGCG…MLWW), 243–263 (LPIA…ALLV), 276–296 (IALN…AAVT), 316–336 (RTGV…TVLM), 357–377 (LMLL…GSGI), 387–407 (IFFI…YLLA), and 418–438 (PAGF…MMML).

This sequence belongs to the multi antimicrobial extrusion (MATE) (TC 2.A.66.1) family. MdtK subfamily.

It is found in the cell inner membrane. Its function is as follows. Multidrug efflux pump that functions probably as a Na(+)/drug antiporter. This Klebsiella pneumoniae subsp. pneumoniae (strain ATCC 700721 / MGH 78578) protein is Multidrug resistance protein MdtK.